The chain runs to 730 residues: Cyclin-T2 (730 aa).

The interaction with MDFIC and MDFI stretch occupies residues 1–300; the sequence is MASGRGASSR…SVTGVPTNPS (300 aa). The 136-residue stretch at 12-147 folds into the Cyclin N-terminal domain; that stretch reads FFTREQLENT…IMLQTLGFEI (136 aa). Residues 250–300 are interaction with POLR2A; it reads RLKKIRNWRANQAARKPKVDGQVSETPLLGSSLVQNSILVDSVTGVPTNPS. 2 stretches are compositionally biased toward polar residues: residues 341–350 and 360–389; these read TSYGLSSHQE and TEQLYSQKQETSLSGSQYNINFQQGPSISL. A disordered region spans residues 341–430; it reads TSYGLSSHQE…GPISTTPGII (90 aa). The segment covering 398 to 412 has biased composition (basic and acidic residues); the sequence is DKISDHSSVKQEYTH. Lys407 is covalently cross-linked (Glycyl lysine isopeptide (Lys-Gly) (interchain with G-Cter in SUMO2)). At Ser480 the chain carries Phosphoserine. The segment at 497 to 652 is disordered; sequence DKKEKSGSLK…SSSSSSSSVK (156 aa). Basic and acidic residues-rich tracts occupy residues 517 to 543 and 552 to 565; these read SASKEELKMKIKVSSSERHSSSDEGSG and ISRDHKEKHKEHPS. Residues 566–578 show a composition bias toward basic residues; the sequence is SRHHTSSHKHSHS. Over residues 579–588 the composition is skewed to low complexity; sequence HSGSSSGGSK. Ser601 bears the Phosphoserine mark. Low complexity-rich tracts occupy residues 606–616 and 637–652; these read SSDGISSSSSS and SSKSSGSSSSSSSSVK.

Belongs to the cyclin family. Cyclin C subfamily. As to quaternary structure, interacts with CDK9 to form P-TEFb. Interacts with POLR2A (via the C-terminal domain (CTD)); mediates transcriptional activity. Interacts with HEXIM1; mediates formation of a tripartite complex with KPNA2. Interacts with HEXIM2. Interacts with PKN1; enhances MYOD1-dependent transcription. P-TEFB complex interacts with RB1; promotes phosphorylation of RB1. P-TEFB complex interacts with MYOD1; promotes the transcriptional activity of MYOD1 through its CDK9-mediated phosphorylation. Interacts with MDFI and MDFIC. Interacts with MON1B; down-regulates CCNT2-mediated activation of viral promoters during herpes simplex virus 1/HHV-1 infection. (Microbial infection) Interacts with HIV-2 and SIV Tat. Does not bind efficiently to the transactivation domain of the HIV-1 Tat. As to expression, ubiquitously expressed.

It is found in the cytoplasm. The protein resides in the perinuclear region. It localises to the nucleus. Regulatory subunit of the cyclin-dependent kinase pair (CDK9/cyclin T) complex, also called positive transcription elongation factor B (P-TEFB), which is proposed to facilitate the transition from abortive to production elongation by phosphorylating the CTD (carboxy-terminal domain) of the large subunit of RNA polymerase II (RNAP II). The activity of this complex is regulated by binding with 7SK snRNA. Plays a role during muscle differentiation; P-TEFB complex interacts with MYOD1; this tripartite complex promotes the transcriptional activity of MYOD1 through its CDK9-mediated phosphorylation and binds the chromatin of promoters and enhancers of muscle-specific genes; this event correlates with hyperphosphorylation of the CTD domain of RNA pol II. In addition, enhances MYOD1-dependent transcription through interaction with PKN1. Involved in early embryo development. Functionally, (Microbial infection) Promotes transcriptional activation of early and late herpes simplex virus 1/HHV-1 promoters. This is Cyclin-T2 from Homo sapiens (Human).